A 56-amino-acid chain; its full sequence is MLTRFLGPRYRQLARNWVPTASLWGAVGAVGLVWATDWRLILDWVPYINGKFKKDD.

The Mitochondrial matrix segment spans residues 1-12; that stretch reads MLTRFLGPRYRQ. The helical transmembrane segment at 13-35 threads the bilayer; the sequence is LARNWVPTASLWGAVGAVGLVWA. The Mitochondrial intermembrane segment spans residues 36 to 56; sequence TDWRLILDWVPYINGKFKKDD.

This sequence belongs to the UQCR11/QCR10 family. In terms of assembly, component of the ubiquinol-cytochrome c oxidoreductase (cytochrome b-c1 complex, complex III, CIII), a multisubunit enzyme composed of 11 subunits. The complex is composed of 3 respiratory subunits cytochrome b, cytochrome c1 and Rieske protein UQCRFS1, 2 core protein subunits UQCRC1/QCR1 and UQCRC2/QCR2, and 6 low-molecular weight protein subunits UQCRH/QCR6, UQCRB/QCR7, UQCRQ/QCR8, UQCR10/QCR9, UQCR11/QCR10 and subunit 9, the cleavage product of Rieske protein UQCRFS1. The complex exists as an obligatory dimer and forms supercomplexes (SCs) in the inner mitochondrial membrane with NADH-ubiquinone oxidoreductase (complex I, CI) and cytochrome c oxidase (complex IV, CIV), resulting in different assemblies (supercomplex SCI(1)III(2)IV(1) and megacomplex MCI(2)III(2)IV(2)).

Its subcellular location is the mitochondrion inner membrane. In terms of biological role, component of the ubiquinol-cytochrome c oxidoreductase, a multisubunit transmembrane complex that is part of the mitochondrial electron transport chain which drives oxidative phosphorylation. The respiratory chain contains 3 multisubunit complexes succinate dehydrogenase (complex II, CII), ubiquinol-cytochrome c oxidoreductase (cytochrome b-c1 complex, complex III, CIII) and cytochrome c oxidase (complex IV, CIV), that cooperate to transfer electrons derived from NADH and succinate to molecular oxygen, creating an electrochemical gradient over the inner membrane that drives transmembrane transport and the ATP synthase. The cytochrome b-c1 complex catalyzes electron transfer from ubiquinol to cytochrome c, linking this redox reaction to translocation of protons across the mitochondrial inner membrane, with protons being carried across the membrane as hydrogens on the quinol. In the process called Q cycle, 2 protons are consumed from the matrix, 4 protons are released into the intermembrane space and 2 electrons are passed to cytochrome c. QCR10 has a role in CIII assembly and RIP1 stability. This chain is Cytochrome b-c1 complex subunit 10 (UQCR11), found in Bos taurus (Bovine).